Reading from the N-terminus, the 189-residue chain is Ribosome hibernation promotion factor (189 aa).

It belongs to the HPF/YfiA ribosome-associated protein family. Long HPF subfamily. In terms of assembly, interacts with 100S ribosomes.

It is found in the cytoplasm. Functionally, required for dimerization of active 70S ribosomes into 100S ribosomes in stationary phase; 100S ribosomes are translationally inactive and sometimes present during exponential growth. This Staphylococcus epidermidis (strain ATCC 35984 / DSM 28319 / BCRC 17069 / CCUG 31568 / BM 3577 / RP62A) protein is Ribosome hibernation promotion factor.